The primary structure comprises 322 residues: 5'-AMP-activated protein kinase subunit gamma (322 aa).

4 CBS domains span residues 37 to 97 (VSYR…NPDK), 118 to 181 (VDQL…CRET), 194 to 253 (ITQD…YNDL), and 262 to 322 (MRRS…LGSN). ADP is bound by residues Ile42, Arg146, 166–169 (TQYR), and Thr195. AMP contacts are provided by residues Thr195, Lys200, and 221-222 (SS). ATP-binding positions include Thr195, Lys200, and 221 to 222 (SS). Residues 221–222 (SS), 291–293 (RVH), and 309–312 (TLSD) each bind ADP. AMP is bound at residue 309-312 (TLSD). 309–312 (TLSD) serves as a coordination point for ATP.

This sequence belongs to the 5'-AMP-activated protein kinase gamma subunit family. AMPK is a heterotrimer of an alpha catalytic subunit (SNF1), a beta (SIP1, SIP2 or GAL83) and a gamma non-catalytic subunits (SNF4). Note=Interaction between SNF1 and SNF4 is inhibited by high levels of glucose.

It localises to the nucleus. The protein localises to the cytoplasm. In terms of biological role, adenine nucleotides-binding subunit gamma of AMP-activated protein kinase (AMPK), an energy sensor protein kinase that plays a key role in regulating cellular energy metabolism. In response to reduction of intracellular ATP levels, AMPK activates energy-producing pathways and inhibits energy-consuming processes: inhibits protein, carbohydrate and lipid biosynthesis, as well as cell growth and proliferation. AMPK acts via direct phosphorylation of metabolic enzymes, and by longer-term effects via phosphorylation of transcription regulators. Gamma non-catalytic subunit mediates binding to AMP, ADP and ATP, leading to activate or inhibit AMPK: AMP-binding results in allosteric activation of alpha catalytic subunit (SNF1) both by inducing phosphorylation and preventing dephosphorylation of catalytic subunits. This Saccharomyces cerevisiae (strain ATCC 204508 / S288c) (Baker's yeast) protein is 5'-AMP-activated protein kinase subunit gamma (SNF4).